A 411-amino-acid chain; its full sequence is Probable phosphatase HAD1 (411 aa).

Polar residues predominate over residues 14-23; the sequence is LPSPNTSQPP. The tract at residues 14–33 is disordered; it reads LPSPNTSQPPSAAPSRRGSF. Asp-61 functions as the Nucleophile in the catalytic mechanism. The Mg(2+) site is built by Asp-61, Asp-63, and Asp-338. Asp-63 functions as the Proton donor in the catalytic mechanism. Positions 296–386 are disordered; it reads PRPTPDVTPV…QSGQAGVTLD (91 aa). Positions 326–345 are enriched in polar residues; sequence VRNTQTIMKGSDDLTGNDSV. Basic and acidic residues predominate over residues 362–373; the sequence is SVEKRAEMEFHR.

Belongs to the HAD-like hydrolase superfamily. Phosphorylated.

In terms of biological role, probable phosphatase. Required for cell wall integrity and virulence. This Cryptococcus neoformans var. grubii serotype A (strain H99 / ATCC 208821 / CBS 10515 / FGSC 9487) (Filobasidiella neoformans var. grubii) protein is Probable phosphatase HAD1.